The chain runs to 194 residues: Protein GrpE (194 aa).

Positions 1–44 (MAEEKQNEELNEQEELNETEAETAEAEQTAAEADAPAEETQTEM) are disordered. The span at 9-25 (ELNEQEELNETEAETAE) shows a compositional bias: acidic residues.

It belongs to the GrpE family. In terms of assembly, homodimer.

It is found in the cytoplasm. Participates actively in the response to hyperosmotic and heat shock by preventing the aggregation of stress-denatured proteins, in association with DnaK and GrpE. It is the nucleotide exchange factor for DnaK and may function as a thermosensor. Unfolded proteins bind initially to DnaJ; upon interaction with the DnaJ-bound protein, DnaK hydrolyzes its bound ATP, resulting in the formation of a stable complex. GrpE releases ADP from DnaK; ATP binding to DnaK triggers the release of the substrate protein, thus completing the reaction cycle. Several rounds of ATP-dependent interactions between DnaJ, DnaK and GrpE are required for fully efficient folding. The polypeptide is Protein GrpE (Bacillus licheniformis (strain ATCC 14580 / DSM 13 / JCM 2505 / CCUG 7422 / NBRC 12200 / NCIMB 9375 / NCTC 10341 / NRRL NRS-1264 / Gibson 46)).